The following is a 536-amino-acid chain: L-ornithine N(5)-monooxygenase SIDA (536 aa).

The interval 1–25 (MSPHRETTGDESTTTTVPQNGTNGA) is disordered. FAD-binding positions include 115-123 (EKQTRFAWH) and Gln134. An L-ornithine-binding site is contributed by Lys139. Val200 lines the FAD pocket. Position 310 (Arg310) interacts with NADP(+). L-ornithine is bound by residues 324–327 (NSIF) and Asn354. 515–517 (TLL) contacts FAD. Residue Ser518 participates in L-ornithine binding.

This sequence belongs to the lysine N(6)-hydroxylase/L-ornithine N(5)-oxygenase family. Homotetramer. The cofactor is FAD.

It catalyses the reaction L-ornithine + NADH + O2 = N(5)-hydroxy-L-ornithine + NAD(+) + H2O. The enzyme catalyses L-ornithine + NADPH + O2 = N(5)-hydroxy-L-ornithine + NADP(+) + H2O. It participates in siderophore biosynthesis. Functionally, L-ornithine N(5)-monooxygenase; part of the gene cluster that mediates the biosynthesis of at least 11 siderophores, including beauverichelin A, dimerumic acid (DA), Na-dimethyl coprogen (NADC), eleutherazine B, ferricrocin (FC), fusarinine A, fusarinine C (FsC), metachelin A, mevalonolactone, rhodotorulic acid (RA) and tenellin. This cocktail of siderophores for iron metabolism is essential for virulence, and more specifically for the fungal virulence in penetrating through the host cuticle. Siderophore synthesis is also involved in conidial germination under iron-deficient conditions. SIDA initiates the biosynthesis of these siderophores with the enzymatic hydroxylation of ornithine. SIDA is indispensable for the production of most siderophores including fusarinine C and ferricrocin but not mevalonolactone and eleutherazine B. However, SIDA mediates the metabolic interplay between synthesis of mevalonolactone and eleutherazine B and other siderophores. The protein is L-ornithine N(5)-monooxygenase SIDA of Beauveria bassiana (strain ARSEF 2860) (White muscardine disease fungus).